Here is a 237-residue protein sequence, read N- to C-terminus: ATP synthase subunit 4, mitochondrial (237 aa).

The transit peptide at 1–30 (MFRALTLKASARPVVAGLCSRQAPIAAVRY) directs the protein to the mitochondrion.

The protein belongs to the eukaryotic ATPase B chain family.

It is found in the mitochondrion. It localises to the mitochondrion inner membrane. Functionally, mitochondrial membrane ATP synthase (F(1)F(0) ATP synthase or Complex V) produces ATP from ADP in the presence of a proton gradient across the membrane which is generated by electron transport complexes of the respiratory chain. F-type ATPases consist of two structural domains, F(1) - containing the extramembraneous catalytic core, and F(0) - containing the membrane proton channel, linked together by a central stalk and a peripheral stalk. During catalysis, ATP synthesis in the catalytic domain of F(1) is coupled via a rotary mechanism of the central stalk subunits to proton translocation. Part of the complex F(0) domain and the peripheric stalk, which acts as a stator to hold the catalytic alpha(3)beta(3) subcomplex and subunit a/ATP6 static relative to the rotary elements. The protein is ATP synthase subunit 4, mitochondrial (ATP4) of Kluyveromyces lactis (strain ATCC 8585 / CBS 2359 / DSM 70799 / NBRC 1267 / NRRL Y-1140 / WM37) (Yeast).